The sequence spans 191 residues: Orotate phosphoribosyltransferase (191 aa).

Residue 114-122 (EDVVTTGKS) participates in 5-phospho-alpha-D-ribose 1-diphosphate binding. Orotate contacts are provided by Thr-118 and Arg-146.

It belongs to the purine/pyrimidine phosphoribosyltransferase family. PyrE subfamily. As to quaternary structure, homodimer. Mg(2+) is required as a cofactor.

The enzyme catalyses orotidine 5'-phosphate + diphosphate = orotate + 5-phospho-alpha-D-ribose 1-diphosphate. Its pathway is pyrimidine metabolism; UMP biosynthesis via de novo pathway; UMP from orotate: step 1/2. Its function is as follows. Catalyzes the transfer of a ribosyl phosphate group from 5-phosphoribose 1-diphosphate to orotate, leading to the formation of orotidine monophosphate (OMP). The protein is Orotate phosphoribosyltransferase of Clostridium botulinum (strain Loch Maree / Type A3).